The sequence spans 37 residues: Cytochrome b6-f complex subunit 5 (37 aa).

Residues 5-25 (LLSGIVLGLIPITLAGLFVTA) traverse the membrane as a helical segment.

It belongs to the PetG family. In terms of assembly, the 4 large subunits of the cytochrome b6-f complex are cytochrome b6, subunit IV (17 kDa polypeptide, PetD), cytochrome f and the Rieske protein, while the 4 small subunits are PetG, PetL, PetM and PetN. The complex functions as a dimer.

It is found in the plastid. The protein resides in the chloroplast thylakoid membrane. Its function is as follows. Component of the cytochrome b6-f complex, which mediates electron transfer between photosystem II (PSII) and photosystem I (PSI), cyclic electron flow around PSI, and state transitions. PetG is required for either the stability or assembly of the cytochrome b6-f complex. This is Cytochrome b6-f complex subunit 5 from Chara vulgaris (Common stonewort).